A 190-amino-acid polypeptide reads, in one-letter code: Peptidyl-tRNA hydrolase (190 aa).

TRNA is bound at residue Y14. The active-site Proton acceptor is H19. TRNA is bound by residues Y64, N66, and N112.

The protein belongs to the PTH family. In terms of assembly, monomer.

The protein resides in the cytoplasm. The catalysed reaction is an N-acyl-L-alpha-aminoacyl-tRNA + H2O = an N-acyl-L-amino acid + a tRNA + H(+). Its function is as follows. Hydrolyzes ribosome-free peptidyl-tRNAs (with 1 or more amino acids incorporated), which drop off the ribosome during protein synthesis, or as a result of ribosome stalling. In terms of biological role, catalyzes the release of premature peptidyl moieties from peptidyl-tRNA molecules trapped in stalled 50S ribosomal subunits, and thus maintains levels of free tRNAs and 50S ribosomes. This is Peptidyl-tRNA hydrolase from Pelodictyon phaeoclathratiforme (strain DSM 5477 / BU-1).